The chain runs to 304 residues: Acetyl-coenzyme A carboxylase carboxyl transferase subunit beta (304 aa).

The 270-residue stretch at 25–294 (VWTKCDSCGQ…PSVVESKADT (270 aa)) folds into the CoA carboxyltransferase N-terminal domain. Zn(2+) contacts are provided by Cys29, Cys32, Cys48, and Cys51. The C4-type zinc finger occupies 29-51 (CDSCGQVLYRAELERNLEVCPKC).

Belongs to the AccD/PCCB family. Acetyl-CoA carboxylase is a heterohexamer composed of biotin carboxyl carrier protein (AccB), biotin carboxylase (AccC) and two subunits each of ACCase subunit alpha (AccA) and ACCase subunit beta (AccD). The cofactor is Zn(2+).

The protein resides in the cytoplasm. The catalysed reaction is N(6)-carboxybiotinyl-L-lysyl-[protein] + acetyl-CoA = N(6)-biotinyl-L-lysyl-[protein] + malonyl-CoA. Its pathway is lipid metabolism; malonyl-CoA biosynthesis; malonyl-CoA from acetyl-CoA: step 1/1. In terms of biological role, component of the acetyl coenzyme A carboxylase (ACC) complex. Biotin carboxylase (BC) catalyzes the carboxylation of biotin on its carrier protein (BCCP) and then the CO(2) group is transferred by the transcarboxylase to acetyl-CoA to form malonyl-CoA. This Yersinia pestis (strain Pestoides F) protein is Acetyl-coenzyme A carboxylase carboxyl transferase subunit beta.